A 370-amino-acid polypeptide reads, in one-letter code: Actin-related protein 2/3 complex subunit 1A-A (370 aa).

6 WD repeats span residues 6–45 (FLLE…WVKG), 50–89 (EHNG…WKPT), 140–179 (PIRS…VDEK), 202–241 (SSGG…SVSQ), 244–284 (TEFL…TFVS), and 322–365 (LHQN…SYIQ).

Belongs to the WD repeat ARPC1 family. Component of the Arp2/3 complex.

Its subcellular location is the cytoplasm. The protein resides in the cytoskeleton. It is found in the nucleus. In terms of biological role, probably functions as a component of the Arp2/3 complex which is involved in regulation of actin polymerization and together with an activating nucleation-promoting factor (NPF) mediates the formation of branched actin networks. In addition to its role in the cytoplasmic cytoskeleton, the Arp2/3 complex also promotes actin polymerization in the nucleus, thereby regulating gene transcription and repair of damaged DNA. The protein is Actin-related protein 2/3 complex subunit 1A-A (arpc1a-a) of Xenopus laevis (African clawed frog).